A 145-amino-acid polypeptide reads, in one-letter code: Arginine repressor (145 aa).

The protein belongs to the ArgR family.

The protein localises to the cytoplasm. It functions in the pathway amino-acid biosynthesis; L-arginine biosynthesis [regulation]. Its function is as follows. Regulates arginine biosynthesis genes. The polypeptide is Arginine repressor (Streptococcus equi subsp. zooepidemicus (strain H70)).